A 233-amino-acid chain; its full sequence is Ribonuclease 3 (233 aa).

In terms of domain architecture, RNase III spans 5-127; it reads LERLCRKLGY…VIGAVYLDGG (123 aa). E40 is a Mg(2+) binding site. The active site involves D44. Mg(2+)-binding residues include D113 and E116. E116 is a catalytic residue. The 71-residue stretch at 156–226 folds into the DRBM domain; that stretch reads DPKTRLQEYL…ATRALALLLA (71 aa).

Belongs to the ribonuclease III family. As to quaternary structure, homodimer. Mg(2+) is required as a cofactor.

The protein localises to the cytoplasm. The catalysed reaction is Endonucleolytic cleavage to 5'-phosphomonoester.. Functionally, digests double-stranded RNA. Involved in the processing of primary rRNA transcript to yield the immediate precursors to the large and small rRNAs (23S and 16S). Processes some mRNAs, and tRNAs when they are encoded in the rRNA operon. Processes pre-crRNA and tracrRNA of type II CRISPR loci if present in the organism. In Nitrosococcus oceani (strain ATCC 19707 / BCRC 17464 / JCM 30415 / NCIMB 11848 / C-107), this protein is Ribonuclease 3.